A 1746-amino-acid chain; its full sequence is Tenascin (1746 aa).

Residues 1–22 (MGVVTRLLVGTFLASLALPAQG) form the signal peptide. Residues 23–185 (GVLKKVIRHK…CEPGWKGPNC (163 aa)) form an involved in hexamer formation region. Residue N38 is glycosylated (N-linked (GlcNAc...) asparagine). Residues S65, S70, and S72 each carry the phosphoserine modification. A glycan (O-linked (Xyl...) (chondroitin sulfate) serine) is linked at S72. Positions 118 to 145 (DVKELLSRLEELENLVSSLREQCTSGAG) form a coiled coil. Residues N166 and N184 are each glycosylated (N-linked (GlcNAc...) asparagine). The 13-residue stretch at 174 to 186 (CVCEPGWKGPNCS) folds into the EGF-like 1; incomplete domain. EGF-like domains follow at residues 187–217 (EPEC…EDCS), 218–249 (QLAC…DCSR), 250–280 (ETCP…EDCN), 281–311 (EPLC…EDCG), 312–342 (ELIC…EDCG), 343–373 (RLAC…ADCS), 374–404 (ERRC…EDCG), 405–435 (ELRC…EDCS), 436–466 (QLRC…YDCS), 467–497 (EMSC…EDCR), 498–528 (ELRC…PDCA), 529–559 (DLAC…KDCG), 560–589 (QRRC…GLDC), and 590–620 (GQRS…GEDC). 42 disulfides stabilise this stretch: C190/C200, C194/C205, C207/C216, C221/C231, C225/C236, C238/C247, C252/C263, C256/C268, C270/C279, C284/C294, C288/C299, C301/C310, C315/C325, C319/C330, C332/C341, C346/C356, C350/C361, C363/C372, C377/C387, C381/C392, C394/C403, C408/C418, C412/C423, C425/C434, C439/C449, C443/C454, C456/C465, C470/C480, C474/C485, C487/C496, C501/C511, C505/C516, C518/C527, C532/C542, C536/C547, C549/C558, C563/C573, C567/C578, C580/C589, C594/C604, C598/C609, and C611/C620. Residue N327 is glycosylated (N-linked (GlcNAc...) asparagine). Fibronectin type-III domains follow at residues 625–717 (PPKD…TPEG), 718–801 (LKFK…VTTT), 805–894 (APSQ…TGLD), 895–988 (APRN…LDPP), 989–1075 (KDFR…AGEP), 1076–1166 (EIGN…EAEP), 1167–1256 (EVDN…TAMG), 1257–1346 (SPKE…ALDG), 1347–1433 (PSGL…TDLD), and 1434–1522 (SPRD…IGLL). N-linked (GlcNAc...) asparagine glycosylation occurs at N788. Residue T905 is modified to Phosphothreonine. Residues N1034, N1079, and N1121 are each glycosylated (N-linked (GlcNAc...) asparagine). The N-linked (GlcNAc...) asparagine glycan is linked to N1354. Positions 1520-1735 (GLLYPFPRDC…FAEMKLRPSN (216 aa)) constitute a Fibrinogen C-terminal domain.

Belongs to the tenascin family. As to quaternary structure, homohexamer; disulfide-linked. A homotrimer may be formed in the triple coiled-coil region and may be stabilized by disulfide rings at both ends. Two of such half-hexabrachions may be disulfide linked within the central globule. Interacts with CSPG4. Interacts (via the 3rd fibronectin type-III domain) with integrin ITGA9:ITGB1. Submaxillary glands and brain.

It is found in the secreted. The protein localises to the extracellular space. Its subcellular location is the extracellular matrix. Extracellular matrix protein implicated in guidance of migrating neurons as well as axons during development, synaptic plasticity as well as neuronal regeneration. Promotes neurite outgrowth from cortical neurons grown on a monolayer of astrocytes. Ligand for integrins alpha-8/beta-1, alpha-9/beta-1, alpha-V/beta-3 and alpha-V/beta-6. In tumors, stimulates angiogenesis by elongation, migration and sprouting of endothelial cells. This chain is Tenascin (TNC), found in Sus scrofa (Pig).